Consider the following 135-residue polypeptide: MVKIRLRRIGRKKLPIYQIVAADARARRDGRFLEVLGRYEPTRKPHQLTFNRERLMYWLSVGAQPTDTAKALIRRTGMLYENYMRIKGKSEEEIGTEMETWQQRNDSRLKRGLDRKAIRRKRKKEAEAKEKESAG.

The interval 94 to 135 is disordered; the sequence is IGTEMETWQQRNDSRLKRGLDRKAIRRKRKKEAEAKEKESAG. 2 stretches are compositionally biased toward basic and acidic residues: residues 105-116 and 124-135; these read NDSRLKRGLDRK and KEAEAKEKESAG.

It belongs to the bacterial ribosomal protein bS16 family.

This is Small ribosomal subunit protein bS16 from Chloroherpeton thalassium (strain ATCC 35110 / GB-78).